Consider the following 283-residue polypeptide: Accumulation of dyads protein 2 (283 aa).

A disordered region spans residues 1–41 (MSDKEQTSGNTDLENAPAGYYSSHDNDVNGVAEDERPSHDS). Over 1–89 (MSDKEQTSGN…APAPVHKFAN (89 aa)) the chain is Cytoplasmic. A helical membrane pass occupies residues 90 to 110 (PAPLGLSAFALTTFVLSMFNA). At 111–120 (RAQGITVPNV) the chain is on the extracellular side. A helical transmembrane segment spans residues 121 to 141 (VVGCAMFYGGLVQLIAGIWEI). At 142–151 (ALENTFGGTA) the chain is on the cytoplasmic side. The helical transmembrane segment at 152–172 (LCSYGGFWLSFAAIYIPWFGI) threads the bilayer. Residues 173–185 (LEAYEDNESDLNN) are Extracellular-facing. Residues 186-206 (ALGFYLLGWAIFTFGLTVCTM) traverse the membrane as a helical segment. The Cytoplasmic segment spans residues 207–208 (KS). A helical membrane pass occupies residues 209-229 (TVMFFLLFFLLALTFLLLSIG). At 230–240 (HFANRLGVTRA) the chain is on the extracellular side. Residues 241–261 (GGVLGVVVAFIAWYNAYAGVA) form a helical membrane-spanning segment. Over 262–283 (TKQNSYVLARPFPLPSTERVIF) the chain is Cytoplasmic.

It belongs to the acetate uptake transporter (AceTr) (TC 2.A.96) family.

It localises to the cell membrane. It is found in the vacuole membrane. In terms of biological role, transporter protein required for ammonia export and acetate uptake and resistance. Necessary for up-regulation and down-regulation of meiotic plaque (MP) component levels in a dependency on external acetate. Has a role in ascus formation. This Saccharomyces cerevisiae (strain ATCC 204508 / S288c) (Baker's yeast) protein is Accumulation of dyads protein 2 (ADY2).